Reading from the N-terminus, the 102-residue chain is Integration host factor subunit beta (102 aa).

This sequence belongs to the bacterial histone-like protein family. As to quaternary structure, heterodimer of an alpha and a beta chain.

Its function is as follows. This protein is one of the two subunits of integration host factor, a specific DNA-binding protein that functions in genetic recombination as well as in transcriptional and translational control. This chain is Integration host factor subunit beta, found in Marinomonas sp. (strain MWYL1).